Reading from the N-terminus, the 555-residue chain is Membrane protein insertase YidC (555 aa).

The next 5 helical transmembrane spans lie at 7 to 24 (VLWV…DNWQ), 367 to 387 (WGWS…PLSA), 437 to 457 (LPVV…LASV), 476 to 496 (PFFI…SLNP), and 511 to 531 (PIAF…YYVV).

The protein belongs to the OXA1/ALB3/YidC family. Type 1 subfamily. As to quaternary structure, interacts with the Sec translocase complex via SecD. Specifically interacts with transmembrane segments of nascent integral membrane proteins during membrane integration.

The protein localises to the cell inner membrane. Required for the insertion and/or proper folding and/or complex formation of integral membrane proteins into the membrane. Involved in integration of membrane proteins that insert both dependently and independently of the Sec translocase complex, as well as at least some lipoproteins. Aids folding of multispanning membrane proteins. In Burkholderia lata (strain ATCC 17760 / DSM 23089 / LMG 22485 / NCIMB 9086 / R18194 / 383), this protein is Membrane protein insertase YidC.